The sequence spans 1081 residues: uncharacterized protein (1081 aa).

2 coiled-coil regions span residues 18–131 (AIEE…FEEN) and 173–242 (NHDE…NDDK). Over residues 22–53 (NNKNREIQEKRQKETKDRNDRMVQNQKDRKEM) the composition is skewed to basic and acidic residues. Positions 22–60 (NNKNREIQEKRQKETKDRNDRMVQNQKDRKEMIGLTNEK) are disordered. Disordered stretches follow at residues 250-321 (TDDE…KPGI) and 388-1081 (QEPK…GNDE). Residues 267 to 283 (TPTPTPTPTPTPTPTPT) show a composition bias toward pro residues. Composition is skewed to low complexity over residues 284–313 (PTTT…KTST) and 396–410 (NNQS…QAGD). Residues 411–421 (DQNKNQNRDEN) show a composition bias toward basic and acidic residues. Low complexity-rich tracts occupy residues 422–568 (NQGG…NNQE), 576–602 (NQDG…GGEN), 614–623 (GENNQDGGEN), 633–644 (DGENNQDGGENN), 662–672 (GENNQDGGENN), and 680–733 (QDGG…NNQD). Acidic residues-rich tracts occupy residues 748–768 (GGED…DNQD), 778–832 (NNQD…DENN), and 840–854 (QDGD…DENN). Low complexity-rich tracts occupy residues 855-869 (NQDG…GENN) and 877-888 (NQDGGENNQDGE). Positions 889 to 954 (NNQDGDENNN…GDENNQDGDE (66 aa)) are enriched in acidic residues. 3 stretches are compositionally biased toward low complexity: residues 955-975 (NNQG…GGDE), 983-1026 (ENNQ…GGDE), and 1034-1081 (GENN…GNDE).

This is an uncharacterized protein from Dictyostelium discoideum (Social amoeba).